The sequence spans 115 residues: Large ribosomal subunit protein bL20 (115 aa).

Belongs to the bacterial ribosomal protein bL20 family.

Its function is as follows. Binds directly to 23S ribosomal RNA and is necessary for the in vitro assembly process of the 50S ribosomal subunit. It is not involved in the protein synthesizing functions of that subunit. This is Large ribosomal subunit protein bL20 (rplT) from Borreliella burgdorferi (strain ATCC 35210 / DSM 4680 / CIP 102532 / B31) (Borrelia burgdorferi).